We begin with the raw amino-acid sequence, 383 residues long: Na(+)/H(+) antiporter NhaA (383 aa).

Helical transmembrane passes span Leu-10–Pro-30, Leu-56–Ile-76, Ile-91–Ser-111, Gly-121–Gly-141, Leu-150–Phe-170, Ser-174–Asn-194, Val-206–Ala-226, Pro-254–Ser-274, Gly-275–Val-295, Gly-327–Phe-347, and Ala-355–Leu-375.

Belongs to the NhaA Na(+)/H(+) (TC 2.A.33) antiporter family.

The protein resides in the cell inner membrane. It catalyses the reaction Na(+)(in) + 2 H(+)(out) = Na(+)(out) + 2 H(+)(in). Its function is as follows. Na(+)/H(+) antiporter that extrudes sodium in exchange for external protons. The protein is Na(+)/H(+) antiporter NhaA of Francisella tularensis subsp. novicida (strain U112).